Reading from the N-terminus, the 134-residue chain is Prefoldin subunit 4 (134 aa).

At alanine 2 the chain carries N-acetylalanine. At serine 125 the chain carries Phosphoserine.

The protein belongs to the prefoldin subunit beta family. In terms of assembly, heterohexamer of two PFD-alpha type and four PFD-beta type subunits. Interacts with URI1; the interaction is phosphorylation-dependent and occurs in a growth-dependent manner.

Its subcellular location is the nucleus. The protein localises to the cytoplasm. The protein resides in the mitochondrion. Binds specifically to cytosolic chaperonin (c-CPN) and transfers target proteins to it. Binds to nascent polypeptide chain and promotes folding in an environment in which there are many competing pathways for nonnative proteins. This is Prefoldin subunit 4 (PFDN4) from Homo sapiens (Human).